Reading from the N-terminus, the 292-residue chain is Glycine--tRNA ligase alpha subunit (292 aa).

The protein belongs to the class-II aminoacyl-tRNA synthetase family. In terms of assembly, tetramer of two alpha and two beta subunits.

The protein resides in the cytoplasm. It catalyses the reaction tRNA(Gly) + glycine + ATP = glycyl-tRNA(Gly) + AMP + diphosphate. This Pelobacter propionicus (strain DSM 2379 / NBRC 103807 / OttBd1) protein is Glycine--tRNA ligase alpha subunit.